Here is a 452-residue protein sequence, read N- to C-terminus: Phosphoglucosamine mutase (452 aa).

The active-site Phosphoserine intermediate is S108. The Mg(2+) site is built by S108, D247, D249, and D251. The residue at position 108 (S108) is a Phosphoserine.

Belongs to the phosphohexose mutase family. Mg(2+) serves as cofactor. Activated by phosphorylation.

The catalysed reaction is alpha-D-glucosamine 1-phosphate = D-glucosamine 6-phosphate. Catalyzes the conversion of glucosamine-6-phosphate to glucosamine-1-phosphate. In Paraburkholderia xenovorans (strain LB400), this protein is Phosphoglucosamine mutase.